The primary structure comprises 130 residues: Astrocytic phosphoprotein PEA-15 (130 aa).

The DED domain maps to 3–81 (EYGTLLQDLT…RPDLLTMVVD (79 aa)). Residues Ser61 and Ser90 each carry the phosphoserine modification. Positions 98-107 (KLTRIPSAKK) are microtubule-binding. The residue at position 104 (Ser104) is a Phosphoserine; by PKC. Ser116 carries the phosphoserine; by CaMK2 modification. The interval 122–129 (KLAPPPKK) is microtubule-binding.

Binds RPS6KA3, MAPK3 and MAPK1. Interacts with CASP8 and FADD. Transient interaction with PLD1 and PLD2. In terms of processing, phosphorylated by protein kinase C and calcium-calmodulin-dependent protein kinase. These phosphorylation events are modulated by neurotransmitters or hormones. In terms of tissue distribution, predominantly expressed in the brain. Low levels in some peripheral organs.

It localises to the cytoplasm. Functionally, blocks Ras-mediated inhibition of integrin activation and modulates the ERK MAP kinase cascade. Inhibits RPS6KA3 activities by retaining it in the cytoplasm. Inhibits both TNFRSF6- and TNFRSF1A-mediated CASP8 activity and apoptosis. Regulates glucose transport by controlling both the content of SLC2A1 glucose transporters on the plasma membrane and the insulin-dependent trafficking of SLC2A4 from the cell interior to the surface. In Mus musculus (Mouse), this protein is Astrocytic phosphoprotein PEA-15 (Pea15).